The chain runs to 1045 residues: Suppression of tumorigenicity 18 protein (1045 aa).

Disordered regions lie at residues 38–90 (KKRR…NDHA), 158–228 (KAES…YNRK), and 340–364 (PRVT…RREA). Over residues 52–63 (NKRKSLLMKPRH) the composition is skewed to basic residues. 2 stretches are compositionally biased toward basic and acidic residues: residues 69-90 (GCKE…NDHA) and 159-177 (AESD…NGRD). CCHHC-type zinc fingers lie at residues 357–400 (PRPE…PLEI), 401–444 (LAMH…KLAM), 713–756 (RDLK…LKSL), 757–800 (MAAN…GIKM), 805–848 (EEKE…QKEN), and 858–901 (KLNK…IKKV). Residues C366, C371, H384, C390, C410, C415, H428, C434, C722, C727, H740, C746, C766, C771, H784, C790, C814, C819, H832, C838, C867, C872, H885, and C891 each coordinate Zn(2+). Positions 918–987 (IDGDEEIRHL…KELAGLSQAL (70 aa)) form a coiled coil.

The protein belongs to the MYT1 family.

The protein resides in the nucleus. In terms of biological role, repressor that binds to DNA sequences containing a bipartite element consisting of a direct repeat of the sequence 5'-AAAGTTT-3' separated by 2-9 nucleotides. Represses basal transcription activity from target promoters. This Mus musculus (Mouse) protein is Suppression of tumorigenicity 18 protein (St18).